We begin with the raw amino-acid sequence, 380 residues long: Gap junction gamma-1 protein (380 aa).

At 1-22 the chain is on the cytoplasmic side; the sequence is MSWSFLTRLLDEISNHSTFVGK. The chain crosses the membrane as a helical span at residues 23 to 45; it reads IWLTLFIIFRIVLTVVGGESIYY. Residues 46–75 are Extracellular-facing; the sequence is DEQSKFVCNTQQPGCENVCYDAFAPLSHVR. Residues 76–95 form a helical membrane-spanning segment; that stretch reads FWVFQIILITTPTIMYLGFA. Topologically, residues 96-171 are cytoplasmic; sequence MHKIARSNDV…RRIKRDGLMK (76 aa). The helical transmembrane segment at 172 to 194 threads the bilayer; that stretch reads VYILQLLSRIIFEVGFLFGQYIL. Over 195–228 the chain is Extracellular; it reads YGFEVAPSYVCTRSPCPHTVDCFVSRPTEKTIFL. A helical membrane pass occupies residues 229–251; sequence LIMYAVSCLCLSLTVLEILHLGL. The Cytoplasmic portion of the chain corresponds to 252-380; that stretch reads SGIRDAFRRR…GSKCEKGIHA (129 aa). Residues 337-380 form a disordered region; the sequence is AYQNGESSPSRSSSPESNGTAVEQNRLNFAQEKQGSKCEKGIHA. The span at 342 to 353 shows a compositional bias: low complexity; the sequence is ESSPSRSSSPES. Residues 354–369 are compositionally biased toward polar residues; that stretch reads NGTAVEQNRLNFAQEK. The segment covering 370-380 has biased composition (basic and acidic residues); sequence QGSKCEKGIHA.

It belongs to the connexin family. Gamma-type subfamily. As to quaternary structure, a connexon is composed of a hexamer of connexins.

Its subcellular location is the cell membrane. The protein resides in the cell junction. The protein localises to the gap junction. Its function is as follows. One gap junction consists of a cluster of closely packed pairs of transmembrane channels, the connexons, through which materials of low MW diffuse from one cell to a neighboring cell. Participates in a developmental pathway for formation of the notochord and tail. The sequence is that of Gap junction gamma-1 protein (gjc1) from Danio rerio (Zebrafish).